The sequence spans 87 residues: Small ribosomal subunit protein bS20 (87 aa).

It belongs to the bacterial ribosomal protein bS20 family.

Its function is as follows. Binds directly to 16S ribosomal RNA. This chain is Small ribosomal subunit protein bS20, found in Clostridium perfringens (strain 13 / Type A).